A 145-amino-acid chain; its full sequence is uncharacterized protein (145 aa).

The first 20 residues, 1 to 20, serve as a signal peptide directing secretion; it reads MPSKVCTLILLFSVINQMKC.

This is an uncharacterized protein from Caenorhabditis elegans.